The chain runs to 1215 residues: Metabotropic glycine receptor (1215 aa).

The signal sequence occupies residues 1 to 23; sequence MGAMAYPLLLCLLLAQLGLGAVG. A disordered region spans residues 23-66; the sequence is GASRDPQGRPDSPRERTPKGKPHAQQPGRASASDSSAPWSRSTD. Over 24–417 the chain is Extracellular; that stretch reads ASRDPQGRPD…CFVQEDKYLR (394 aa). Residues 28–40 show a composition bias toward basic and acidic residues; the sequence is PQGRPDSPRERTP. Residues 52 to 64 are compositionally biased toward low complexity; the sequence is ASASDSSAPWSRS. Residues 85-281 form a cache-like region region; the sequence is YLYTGDSHQL…CENGSYKPGW (197 aa). Residues Asn-98 and Asn-143 are each glycosylated (N-linked (GlcNAc...) asparagine). An intrachain disulfide couples Cys-99 to Cys-272. Ser-172 and Arg-173 together coordinate glycine. Asn-215 carries N-linked (GlcNAc...) asparagine glycosylation. Position 271 (Glu-271) interacts with glycine. Asn-274 carries an N-linked (GlcNAc...) asparagine glycan. A glycine-binding site is contributed by Asp-307. A glycan (N-linked (GlcNAc...) asparagine) is linked at Asn-333. A helical transmembrane segment spans residues 418–439; it reads LAIISFQALCMLLDFVSMLVVY. Topologically, residues 440 to 451 are cytoplasmic; it reads HFRKAKSIRASG. Residues 452-474 form a helical membrane-spanning segment; that stretch reads LILLETILFGSLLLYFPVVILYF. The Extracellular segment spans residues 475-478; the sequence is EPST. The chain crosses the membrane as a helical span at residues 479–501; that stretch reads FRCILLRWARLLGFATVYGTVTL. Cys-481 and Cys-573 are oxidised to a cystine. Residues 502–525 are Cytoplasmic-facing; the sequence is KLHRVLKVFLSRTAQRIPYMTGGR. Residues 526–547 traverse the membrane as a helical segment; the sequence is VMRMLAVILLVVFWFLIGWTSS. Topologically, residues 548 to 576 are extracellular; the sequence is VCQNLEKQISLIGQGKTSDHLIFNMCLID. Residues 577–597 traverse the membrane as a helical segment; the sequence is RWDYMTAVAEFLFLLWGVYLC. The Cytoplasmic segment spans residues 598–611; that stretch reads YAVRTVPSAFHEPR. The chain crosses the membrane as a helical span at residues 612–633; sequence YMAVAVHNELIISAIFHTIRFV. Over 634–642 the chain is Extracellular; that stretch reads LASRLQSDW. Residues 643 to 664 form a helical membrane-spanning segment; sequence MLMLYFAHTHLTVTVTIGLLLI. At 665–1215 the chain is on the cytoplasmic side; that stretch reads PKFSHSSNNP…KEEIWDSFKV (551 aa). Residues Ser-694, Ser-705, and Ser-708 each carry the phosphoserine modification. The interval 757–999 is disordered; sequence RITEIPETVS…LNPGTTQMKD (243 aa). Composition is skewed to basic and acidic residues over residues 769–781 and 819–828; these read CSKE…DHGT and STYDHVRDQT. Lys-774 is covalently cross-linked (Glycyl lysine isopeptide (Lys-Gly) (interchain with G-Cter in ubiquitin)). Ser-865 bears the Phosphoserine mark. Over residues 925–943 the composition is skewed to basic and acidic residues; the sequence is VEERTKSQKPLPKDKETNR. A Phosphoserine modification is found at Ser-946. Residues 979–998 show a composition bias toward polar residues; the sequence is QRVNPTTANSDLNPGTTQMK. 2 consecutive short sequence motifs (VCPWE motif) follow at residues 1006-1010 and 1071-1075; these read VCPWE and VCLWE. Phosphoserine is present on Ser-1080. The disordered stretch occupies residues 1117–1164; that stretch reads SEELPPKAVASKTENENLNQIGHQEKKTSSSEENVRGSYNSSNNFQQP. The span at 1139–1151 shows a compositional bias: basic and acidic residues; sequence HQEKKTSSSEENV. A compositionally biased stretch (polar residues) spans 1153 to 1164; sequence GSYNSSNNFQQP. The VCPWE motif 3 motif lies at 1171–1175; that stretch reads VCPWE.

This sequence belongs to the G-protein coupled receptor 3 family. Homodimer. Associates with the RGS7-GNB5 complex, promoting its localization to the cell membrane and regulating its GTPase activator activity. Interacts (via VCPWE motifs) with GNAO1. Interacts with GPC4. Interacts with EGFLAM.

It localises to the cell membrane. The protein resides in the postsynaptic cell membrane. It is found in the presynaptic cell membrane. Its subcellular location is the nucleus. Its function is as follows. Metabotropic receptor for glycine that controls synapse formation and function in the brain. Acts as an atypical G-protein coupled receptor that recruits and regulates the RGS7-GNB5 complex instead of activating G proteins. In absence of glycine ligand, promotes the GTPase activator activity of RGS7, increasing the GTPase activity of G protein alpha subunits, thereby driving them into their inactive GDP-bound form. Glycine-binding changes the conformation of the intracellular surface, inhibiting the GTPase activator activity of the RGS7-GNB5 complex, promoting G protein alpha subunits into their active GTP-bound form and regulating cAMP levels. Also able to bind taurine, a compound closely related to glycine, but with a two-fold lower affinity. Glycine receptor-dependent regulation of cAMP controls key ion channels, kinases and neurotrophic factors involved in neuronal excitability and synaptic transmission. Plays a pivotal role in regulating mood and cognition via its ability to regulate neuronal excitability in L2/L3 pyramidal neurons of the prefrontal cortex. Also involved in spatial learning by regulating hippocampal CA1 neuronal excitability. Acts as a synaptic organizer in the hippocampus, required for proper mossy fiber-CA3 neurocircuitry establishment, structure and function: induces presynaptic differentiation in contacting axons via its interaction with GPC4. In addition to glycine, may also act as a receptor for osteocalcin (BGLAP) hormone: osteocalcin-binding initiates a signaling response that prevents neuronal apoptosis in the hippocampus and regulates the synthesis of neurotransmitters. This Homo sapiens (Human) protein is Metabotropic glycine receptor.